The sequence spans 514 residues: FAD-dependent monooxygenase CPUR_05423 (514 aa).

The FAD site is built by V79 and R146. R227 is an active-site residue. FAD contacts are provided by D358 and G371.

The protein belongs to the paxM FAD-dependent monooxygenase family. The cofactor is FAD.

It participates in pigment biosynthesis. Its function is as follows. FAD-dependent monooxygenase; part of the ergochrome gene cluster responsible for the typical purple-black color of the ergot sclerotia. The ergochrome gene cluster produces several ergot pigments including the yellow ergochrome secalonic acid and its derivatives, as well as the red anthraquinones endocrocin and clavorubin. The pathway begins with the synthesis of atrochrysone thioester by the polyketide synthase (PKS) CPUR_05437. The atrochrysone carboxyl ACP thioesterase CPUR_05436 then breaks the thioester bond and releases the atrochrysone carboxylic acid from CPUR_05437. The atrochrysone carboxylic acid is then converted to atrochrysone which is further transformed into emodin anthrone. The next step is performed by the anthrone oxygenase CPUR_05434 that catalyzes the oxidation of emodinanthrone to emodin. Emodin is further modified to yield monodictyphenone via several steps involving CPUR_05427, CPUR_05428, CPUR_05429 and CPUR_05430. The short chain dehydrogenase/reductase CPUR_05418 then catalyzes the C-5 ketoreduction to give the xanthone skeleton of the monomeric units. Ergochromes formation requires further dimerization steps of different xanthone units, probably catalyzed by the cytochrome P450 monooxygenase CPUR_05419. CPUR_05425, CPUR_05426 and CPUR_05431 are unique to Claviceps, thus it is likely that they are involved in further modification of xanthone units or in their dimerization. The yellow ergochromes and the red anthraquinone pigments endocrocin and clavorubin are products from the same PKS derived precursors and the latter are likely shunt products in the pathway of xanthone biosynthesis. It is proposed that atrochrysone carboxylic acid released from the PKS CPUR_05437 can also be converted to endocrocin anthrone which is further oxidized into endocrocin by CPUR_05435. Endocrocin could be then modified to clavorubin, possibly by CPUR_05423 and CPUR_05431. Clavorubin is the principal anthraquinone metabolite produced by the cluster with a much higher yield compared to endocrocin. The protein is FAD-dependent monooxygenase CPUR_05423 of Claviceps purpurea (strain 20.1) (Ergot fungus).